Here is a 129-residue protein sequence, read N- to C-terminus: Small ribosomal subunit protein uS12 (129 aa).

Aspartate 89 carries the post-translational modification 3-methylthioaspartic acid. The interval 110–129 (RKQGRSRYGAPRKQVVATKK) is disordered.

Belongs to the universal ribosomal protein uS12 family. In terms of assembly, part of the 30S ribosomal subunit. Contacts proteins S8 and S17. May interact with IF1 in the 30S initiation complex.

Its function is as follows. With S4 and S5 plays an important role in translational accuracy. Interacts with and stabilizes bases of the 16S rRNA that are involved in tRNA selection in the A site and with the mRNA backbone. Located at the interface of the 30S and 50S subunits, it traverses the body of the 30S subunit contacting proteins on the other side and probably holding the rRNA structure together. The combined cluster of proteins S8, S12 and S17 appears to hold together the shoulder and platform of the 30S subunit. This chain is Small ribosomal subunit protein uS12, found in Rickettsia bellii (strain RML369-C).